The following is a 465-amino-acid chain: ATP synthase subunit beta (465 aa).

152–159 (GGAGVGKT) is an ATP binding site.

The protein belongs to the ATPase alpha/beta chains family. F-type ATPases have 2 components, CF(1) - the catalytic core - and CF(0) - the membrane proton channel. CF(1) has five subunits: alpha(3), beta(3), gamma(1), delta(1), epsilon(1). CF(0) has three main subunits: a(1), b(2) and c(9-12). The alpha and beta chains form an alternating ring which encloses part of the gamma chain. CF(1) is attached to CF(0) by a central stalk formed by the gamma and epsilon chains, while a peripheral stalk is formed by the delta and b chains.

It localises to the cell membrane. It carries out the reaction ATP + H2O + 4 H(+)(in) = ADP + phosphate + 5 H(+)(out). In terms of biological role, produces ATP from ADP in the presence of a proton gradient across the membrane. The catalytic sites are hosted primarily by the beta subunits. This is ATP synthase subunit beta from Ruminiclostridium cellulolyticum (strain ATCC 35319 / DSM 5812 / JCM 6584 / H10) (Clostridium cellulolyticum).